The chain runs to 307 residues: tRNA dimethylallyltransferase (307 aa).

10–17 (GPTASGKS) is a binding site for ATP. Residue 12–17 (TASGKS) coordinates substrate. 2 interaction with substrate tRNA regions span residues 35–38 (DSMQ) and 159–163 (QRLCR).

Belongs to the IPP transferase family. Monomer. The cofactor is Mg(2+).

The enzyme catalyses adenosine(37) in tRNA + dimethylallyl diphosphate = N(6)-dimethylallyladenosine(37) in tRNA + diphosphate. Functionally, catalyzes the transfer of a dimethylallyl group onto the adenine at position 37 in tRNAs that read codons beginning with uridine, leading to the formation of N6-(dimethylallyl)adenosine (i(6)A). The protein is tRNA dimethylallyltransferase of Phenylobacterium zucineum (strain HLK1).